The sequence spans 112 residues: uncharacterized protein (112 aa).

2 consecutive transmembrane segments (helical) span residues 33–53 and 69–89; these read IIGI…MIIF and MNNI…HITV.

The protein resides in the membrane. This is an uncharacterized protein from Saccharomyces cerevisiae (strain ATCC 204508 / S288c) (Baker's yeast).